Here is a 463-residue protein sequence, read N- to C-terminus: uncharacterized protein (463 aa).

The protein belongs to the UbiD family.

This is an uncharacterized protein from Rhodospirillum rubrum.